We begin with the raw amino-acid sequence, 165 residues long: Neurotrophin-3 (165 aa).

Residues 1-3 (IQS) form the signal peptide. A propeptide spanning residues 4–119 (TSMDQGSLSE…VLNRTSRRKR (116 aa)) is cleaved from the precursor. N112 is a glycosylation site (N-linked (GlcNAc...) asparagine).

It belongs to the NGF-beta family.

The protein resides in the secreted. Functionally, seems to promote the survival of visceral and proprioceptive sensory neurons. The chain is Neurotrophin-3 (NTF3) from Anilius scytale (Coral cylinder snake).